We begin with the raw amino-acid sequence, 346 residues long: MNPYVRAIITSGLILGPIITMSSNHWITAWCGLEMNSLTMIPLIANKYQPRAIEASTKYFLTQAMASYLMLSAALMNMWYYGQWDMQLLTDNISCTTMTVAMSIKLAAAPFHFWFPEVLQGATVLTALLLTTWQKLAPLTILVQCSQNLDTTLLIALGMTSILIGGWGGLNQTQIRKIMAFSSIAHLGWMYAILTLSPKILLLTFYLYVAMTATTFLMINVLQTNNMSAIMISWTKTPFMNTMMLLNLMSLAGLPPLTGFAPKWLILQEFTKQRLSMFASMMITSSLLSLYFYLRMSYYTIITLPPTTCNYPLQWRLMTNIHTALATITPLATALMPLLPTLKAIP.

Helical transmembrane passes span 7–27, 59–79, 93–115, 151–171, 178–198, 200–220, 242–262, 275–294, and 325–345; these read AIIT…NHWI, YFLT…MNMW, ISCT…HFWF, TTLL…GGLN, IMAF…TLSP, ILLL…LMIN, TMML…GFAP, LSMF…YFYL, and LATI…LKAI.

It belongs to the complex I subunit 2 family.

It localises to the mitochondrion inner membrane. It carries out the reaction a ubiquinone + NADH + 5 H(+)(in) = a ubiquinol + NAD(+) + 4 H(+)(out). Core subunit of the mitochondrial membrane respiratory chain NADH dehydrogenase (Complex I) that is believed to belong to the minimal assembly required for catalysis. Complex I functions in the transfer of electrons from NADH to the respiratory chain. The immediate electron acceptor for the enzyme is believed to be ubiquinone. The sequence is that of NADH-ubiquinone oxidoreductase chain 2 (MT-ND2) from Pelomedusa subrufa (African side-necked turtle).